We begin with the raw amino-acid sequence, 349 residues long: MALPDFSMRQLLEAGAHFGHQAHRWNPKMQSYIFGTRNNIHIIDLAQTVPALYQALQAVSDTVAKGGRVLFVGTKRQAADVVAESARRSAQYFVNSRWLGGTLTNWKTISGSIQRLRKVDEILAGGGQGLTKKERLMLSREKDKLEKALGGIKDMGGVPDLLFVIDTNKEQLAIKEAKRLGIPVAAIVDTNSDPDGITYVVPANDDAGRAIALYCDLIARAAIDGISRGQGALGMDLGASEEPLAEELPANLNEPEVAHLDIAEPYVGEPFELLAAPRGAPDDLTKLTGVGPQLVQKLNDAGIYHYWQIAAMAPEDVAKVDSELKLNGRIERDGWINQARAFVEAAAAA.

It belongs to the universal ribosomal protein uS2 family.

This Methylobacterium nodulans (strain LMG 21967 / CNCM I-2342 / ORS 2060) protein is Small ribosomal subunit protein uS2.